Here is a 473-residue protein sequence, read N- to C-terminus: Cyprosin (473 aa).

Residues 1–33 (LKKRKVNILNHPGEHAGSNDANARRKYGVRGNF) constitute a propeptide, activation peptide. The Peptidase A1 domain occupies 51-470 (YFGEIGIGTP…DYGNLRVGFA (420 aa)). Residue D69 is part of the active site. Disulfide bonds link C82–C88 and C247–C251. D256 is a catalytic residue. The Saposin B-type domain maps to 281–384 (VMSQQCKSLV…DKLCERLPSP (104 aa)). Cystine bridges form between C286-C378, C311-C350, C317-C347, and C392-C429. N364 carries N-linked (GlcNAc...) asparagine glycosylation.

It belongs to the peptidase A1 family. In terms of tissue distribution, mostly present in the violet parts of styles and corollas of mature flowers.

The polypeptide is Cyprosin (CYPRO1) (Cynara cardunculus (Cardoon)).